A 30-amino-acid polypeptide reads, in one-letter code: Ranatuerin-2OK (30 aa).

Cysteine 23 and cysteine 30 are oxidised to a cystine.

In terms of tissue distribution, expressed by the skin glands.

It is found in the secreted. In terms of biological role, antimicrobial peptide. Active against Gram-negative bacterium E.coli (MIC=12.5 uM) and against Gram-positive bacterium S.aureus (MIC=50 uM). This chain is Ranatuerin-2OK, found in Nidirana okinavana (Kampira Falls frog).